We begin with the raw amino-acid sequence, 285 residues long: Small ribosomal subunit biogenesis GTPase RsgA (285 aa).

The region spanning Lys-61–Phe-215 is the CP-type G domain. GTP contacts are provided by residues Thr-110–Asp-113 and Gly-159–Ser-167. Zn(2+) is bound by residues Cys-239, Cys-244, His-246, and Cys-254.

Belongs to the TRAFAC class YlqF/YawG GTPase family. RsgA subfamily. In terms of assembly, monomer. Associates with 30S ribosomal subunit, binds 16S rRNA. It depends on Zn(2+) as a cofactor.

It localises to the cytoplasm. One of several proteins that assist in the late maturation steps of the functional core of the 30S ribosomal subunit. Helps release RbfA from mature subunits. May play a role in the assembly of ribosomal proteins into the subunit. Circularly permuted GTPase that catalyzes slow GTP hydrolysis, GTPase activity is stimulated by the 30S ribosomal subunit. This Mesomycoplasma hyopneumoniae (strain J / ATCC 25934 / NCTC 10110) (Mycoplasma hyopneumoniae) protein is Small ribosomal subunit biogenesis GTPase RsgA.